The sequence spans 117 residues: MKYPYSFEVLTNGKLVMRLPQEIKLMETFLGVEVSAFGDWILEEIHSVLNGKENYVVVNGNICGLEIRKDTTTVLDNLAEDGKGDFCEIETIELVDLIHIWQDKQKEFKKGKNKELK.

As to quaternary structure, probably interacts with cognate toxin BC_0920 but not with other non-cognate toxins. The interaction inhibits the toxic activity of BC_0920.

It is found in the cytoplasm. In terms of biological role, immunity component of an LXG toxin-immunity module. Neutralizes the RNase activity of cognate toxin BC_0920. Probably does not have immunity protein activity on other toxins with the LXG domain. This chain is Immunity protein BC_0921, found in Bacillus cereus (strain ATCC 14579 / DSM 31 / CCUG 7414 / JCM 2152 / NBRC 15305 / NCIMB 9373 / NCTC 2599 / NRRL B-3711).